The following is a 235-amino-acid chain: Cytochrome c-554 (235 aa).

Positions 1 to 24 (MKIMIACGLVAAALFTLTSGQSLA) are cleaved as a signal peptide. Positions 35, 38, 39, 51, 84, 87, 88, 112, 115, 116, 126, 158, 161, 162, and 203 each coordinate heme. The disordered stretch occupies residues 121–144 (NFRGDHRKSGQAFEKSGKKTPRKD).

In terms of processing, binds 4 heme groups per subunit.

Its subcellular location is the periplasm. Functionally, involved in ammonia oxidation; accepts electrons directly from hydroxylamine oxidoreductase (HAO). This chain is Cytochrome c-554 (cycA1), found in Nitrosomonas europaea (strain ATCC 19718 / CIP 103999 / KCTC 2705 / NBRC 14298).